Here is a 404-residue protein sequence, read N- to C-terminus: MFRCWGPHWGWVPCAPTPWLLLSLLVCSAPFGLQGEETRQVSMEVISGWPNPQNLLHIRAVGSNSTLHYVWSSLGPPAVVLVATNTTQSVLSVNWSLLLSPDPAGALMVLPKSSIQFSSALVFTRLLEFDSTNASEGAQPPGKPYPPYSLAKFSWNNITNSLDLANLSADFQGRPVDDPTGAFANGSLTFKVQAFSRSGRPAQPPRLLHTADVCQLEVALVGASPRGNHSLFGLEVATLGQGPDCPSVNERNSIDDEYAPAVFQLNQLLWGSSPSGFMQWRPVAFSEEERARESALPCQASTLHSTLASSLPHSPIVQAFFGSQNNFCAFNLTFGAPTGPGYWDQYYLCWSMLLGMGFPPVDIFSPLVLGIMAVALGAPGLMFLGGGLFLLLRHRRYSEYQSIN.

Residues 1-35 (MFRCWGPHWGWVPCAPTPWLLLSLLVCSAPFGLQG) form the signal peptide. Residues 36–370 (EETRQVSMEV…VDIFSPLVLG (335 aa)) are Lumenal-facing. Residues Asn64, Asn85, Asn94, Asn133, Asn157, Asn166, Asn185, Asn228, and Asn331 are each glycosylated (N-linked (GlcNAc...) asparagine). Residues 371-391 (IMAVALGAPGLMFLGGGLFLL) traverse the membrane as a helical segment. Residues 392 to 404 (LRHRRYSEYQSIN) are Cytoplasmic-facing. A Lysosomal targeting motif motif is present at residues 400-404 (YQSIN).

Belongs to the GLMP family. Interacts (via lumenal domain) with lysosomal protein MFSD1; the interaction starts while both proteins are still in the endoplasmic reticulum and is required for stabilization of MFSD1 in lysosomes but has no direct effect on its targeting to lysosomes or transporter activity. In terms of processing, highly N-glycosylated. N-glycosylation is essential for GLMP stability and for MFSD1 lysosomal localization. As to expression, detected in brain, heart, liver, kidney, lung, intestine, testis and spleen. Expressed at highest levels in kidney cortex. However, another study reports highest expression levels in lung. Expressed in myoblasts with expression increasing during differentiation into myotubes.

Its subcellular location is the lysosome membrane. Its function is as follows. Required to protect lysosomal transporter MFSD1 from lysosomal proteolysis and for MFSD1 lysosomal localization. This chain is Glycosylated lysosomal membrane protein, found in Mus musculus (Mouse).